We begin with the raw amino-acid sequence, 209 residues long: Uracil phosphoribosyltransferase (209 aa).

5-phospho-alpha-D-ribose 1-diphosphate contacts are provided by residues arginine 79, arginine 104, and 131-139; that span reads DPMLATGGS. Residues isoleucine 194 and 199–201 contribute to the uracil site; that span reads GDA. Residue aspartate 200 participates in 5-phospho-alpha-D-ribose 1-diphosphate binding.

Belongs to the UPRTase family. Requires Mg(2+) as cofactor.

It catalyses the reaction UMP + diphosphate = 5-phospho-alpha-D-ribose 1-diphosphate + uracil. It participates in pyrimidine metabolism; UMP biosynthesis via salvage pathway; UMP from uracil: step 1/1. Its activity is regulated as follows. Allosterically activated by GTP. Functionally, catalyzes the conversion of uracil and 5-phospho-alpha-D-ribose 1-diphosphate (PRPP) to UMP and diphosphate. The sequence is that of Uracil phosphoribosyltransferase from Streptococcus salivarius.